The chain runs to 434 residues: 3-phosphoshikimate 1-carboxyvinyltransferase (434 aa).

Lys-22, Ser-23, and Arg-27 together coordinate 3-phosphoshikimate. Residue Lys-22 coordinates phosphoenolpyruvate. The phosphoenolpyruvate site is built by Gly-93 and Arg-121. 3-phosphoshikimate contacts are provided by Ser-168, Ser-169, Gln-170, Ser-199, Asp-320, and Lys-347. Gln-170 serves as a coordination point for phosphoenolpyruvate. The active-site Proton acceptor is Asp-320. Phosphoenolpyruvate contacts are provided by Arg-351, Arg-394, and Lys-419.

It belongs to the EPSP synthase family. In terms of assembly, monomer.

The protein localises to the cytoplasm. It catalyses the reaction 3-phosphoshikimate + phosphoenolpyruvate = 5-O-(1-carboxyvinyl)-3-phosphoshikimate + phosphate. It functions in the pathway metabolic intermediate biosynthesis; chorismate biosynthesis; chorismate from D-erythrose 4-phosphate and phosphoenolpyruvate: step 6/7. Functionally, catalyzes the transfer of the enolpyruvyl moiety of phosphoenolpyruvate (PEP) to the 5-hydroxyl of shikimate-3-phosphate (S3P) to produce enolpyruvyl shikimate-3-phosphate and inorganic phosphate. This chain is 3-phosphoshikimate 1-carboxyvinyltransferase, found in Burkholderia vietnamiensis (strain G4 / LMG 22486) (Burkholderia cepacia (strain R1808)).